We begin with the raw amino-acid sequence, 802 residues long: Mitogen-activated protein kinase kinase kinase 20 (802 aa).

Position 2 is an N-acetylserine (Ser2). A phosphoserine mark is found at Ser2, Ser3, and Ser7. Residues 16–277 form the Protein kinase domain; the sequence is LQFFENCGGG…NLPDQCNSFL (262 aa). ATP is bound by residues 22–30 and Lys45; that span reads CGGGSFGSV. The Proton acceptor role is filled by Asp133. A Phosphothreonine; by autocatalysis modification is found at Thr161. The residue at position 165 (Ser165) is a Phosphoserine; by autocatalysis. Phosphoserine occurs at positions 275 and 302. Positions 287–308 are leucine-zipper; the sequence is IEATLERLKKLERDLSFKEQEL. Residues 339 to 410 enclose the SAM domain; it reads WTEDDVYFWV…KSAIEKLTHD (72 aa). Phosphoserine occurs at positions 434, 453, and 567. At Thr586 the chain carries Phosphothreonine. Residues Ser587, Ser593, and Ser599 each carry the phosphoserine modification. The span at 624–642 shows a compositional bias: polar residues; sequence YQQITPSINPSRSSSPTQY. The tract at residues 624-802 is disordered; that stretch reads YQQITPSINP…RGNYRGRRNF (179 aa). Thr628 carries the phosphothreonine modification. Ser634, Ser638, Ser649, Ser650, and Ser661 each carry phosphoserine. Positions 643–666 are enriched in low complexity; that stretch reads GLSRNFSSLNLSSRDSGFSSLNDS. The segment covering 667-678 has biased composition (basic and acidic residues); sequence SSERGRYSDRSR. A sensing domain (S) region spans residues 670-713; sequence RGRYSDRSRNKYYRGSVSLNSSPKGRYGGKSQHSTPSRERYSGK. Phosphoserine is present on residues Ser685, Ser720, Ser727, and Ser733. Positions 728-741 are enriched in basic and acidic residues; the sequence is PDFKRSPNDHDRRV. A Phosphothreonine modification is found at Thr744. A C-terminal domain (CTD) region spans residues 776–802; sequence RKKTHRQLSAKTSKERTRGNYRGRRNF.

The protein belongs to the protein kinase superfamily. STE Ser/Thr protein kinase family. MAP kinase kinase kinase subfamily. As to quaternary structure, homodimer. Interacts with ZNF33A. Component of a signaling complex containing at least AKAP13, PKN1, MAPK14, MAP3K20 and MAP2K3. Within this complex, AKAP13 interacts directly with PKN1, which in turn recruits MAPK14, MAP2K3 and MAP3K20. Interacts with EIF2AK4/GCN2; promoting EIF2AK4/GCN2 kinase activity. Interacts with isoform ZAKbeta. In terms of assembly, interacts with isoform ZAKalpha. The cofactor is Mg(2+). Activated by phosphorylation by PKN1, followed by autophosphorylation on Thr-161 and Ser-165. Autophosphorylation in response to ribotoxic stress promotes dissociation from colliding ribosomes and activation.

The protein resides in the cytoplasm. Its subcellular location is the nucleus. It catalyses the reaction L-seryl-[protein] + ATP = O-phospho-L-seryl-[protein] + ADP + H(+). The catalysed reaction is L-threonyl-[protein] + ATP = O-phospho-L-threonyl-[protein] + ADP + H(+). Its activity is regulated as follows. Activated in response to stress, such as ribosomal stress, osmotic shock and ionizing radiation. Activated by phosphorylation by PKN1, followed by autophosphorylation on Thr-161 and Ser-165. Functionally, stress-activated component of a protein kinase signal transduction cascade that promotes programmed cell death in response to various stress, such as ribosomal stress, osmotic shock and ionizing radiation. Acts by catalyzing phosphorylation of MAP kinase kinases, leading to activation of the JNK (MAPK8/JNK1, MAPK9/JNK2 and/or MAPK10/JNK3) and MAP kinase p38 (MAPK11, MAPK12, MAPK13 and/or MAPK14) pathways. Activates JNK through phosphorylation of MAP2K4/MKK4 and MAP2K7/MKK7, and MAP kinase p38 gamma (MAPK12) via phosphorylation of MAP2K3/MKK3 and MAP2K6/MKK6. Involved in stress associated with adrenergic stimulation: contributes to cardiac decompensation during periods of acute cardiac stress. May be involved in regulation of S and G2 cell cycle checkpoint by mediating phosphorylation of CHEK2. Its function is as follows. Key component of the stress-activated protein kinase signaling cascade in response to ribotoxic stress or UV-B irradiation. Acts as the proximal sensor of ribosome collisions during the ribotoxic stress response (RSR). Directly binds to the ribosome by inserting its flexible C-terminus into the ribosomal intersubunit space, thereby acting as a sentinel for colliding ribosomes. Upon ribosome collisions, activates either the stress-activated protein kinase signal transduction cascade or the integrated stress response (ISR), leading to programmed cell death or cell survival, respectively. Dangerous levels of ribosome collisions trigger the autophosphorylation and activation of MAP3K20, which dissociates from colliding ribosomes and phosphorylates MAP kinase kinases, leading to activation of the JNK and MAP kinase p38 pathways that promote programmed cell death. Less dangerous levels of ribosome collisions trigger the integrated stress response (ISR): MAP3K20 activates EIF2AK4/GCN2 independently of its protein-kinase activity, promoting EIF2AK4/GCN2-mediated phosphorylation of EIF2S1/eIF-2-alpha. Also acts as a histone kinase by phosphorylating histone H3 at 'Ser-28' (H3S28ph). Isoform that lacks the C-terminal region that mediates ribosome-binding: does not act as a sensor of ribosome collisions in response to ribotoxic stress. May act as an antagonist of isoform ZAKalpha: interacts with isoform ZAKalpha, leading to decrease the expression of isoform ZAKalpha. The polypeptide is Mitogen-activated protein kinase kinase kinase 20 (Mus musculus (Mouse)).